Here is a 983-residue protein sequence, read N- to C-terminus: Bifunctional glutamine synthetase adenylyltransferase/adenylyl-removing enzyme (983 aa).

Residues 1-468 (MTVENAKALF…KQYAALFAQA (468 aa)) are adenylyl removase. Positions 473–983 (AASGNLVFTG…FDKLVGHGAD (511 aa)) are adenylyl transferase.

It belongs to the GlnE family. Mg(2+) serves as cofactor.

The catalysed reaction is [glutamine synthetase]-O(4)-(5'-adenylyl)-L-tyrosine + phosphate = [glutamine synthetase]-L-tyrosine + ADP. The enzyme catalyses [glutamine synthetase]-L-tyrosine + ATP = [glutamine synthetase]-O(4)-(5'-adenylyl)-L-tyrosine + diphosphate. Functionally, involved in the regulation of glutamine synthetase GlnA, a key enzyme in the process to assimilate ammonia. When cellular nitrogen levels are high, the C-terminal adenylyl transferase (AT) inactivates GlnA by covalent transfer of an adenylyl group from ATP to specific tyrosine residue of GlnA, thus reducing its activity. Conversely, when nitrogen levels are low, the N-terminal adenylyl removase (AR) activates GlnA by removing the adenylyl group by phosphorolysis, increasing its activity. The regulatory region of GlnE binds the signal transduction protein PII (GlnB) which indicates the nitrogen status of the cell. The chain is Bifunctional glutamine synthetase adenylyltransferase/adenylyl-removing enzyme from Brucella suis biovar 1 (strain 1330).